A 502-amino-acid polypeptide reads, in one-letter code: ATP synthase subunit alpha (502 aa).

Position 169 to 176 (169 to 176 (GDRQTGKT)) interacts with ATP.

It belongs to the ATPase alpha/beta chains family. F-type ATPases have 2 components, CF(1) - the catalytic core - and CF(0) - the membrane proton channel. CF(1) has five subunits: alpha(3), beta(3), gamma(1), delta(1), epsilon(1). CF(0) has three main subunits: a(1), b(2) and c(9-12). The alpha and beta chains form an alternating ring which encloses part of the gamma chain. CF(1) is attached to CF(0) by a central stalk formed by the gamma and epsilon chains, while a peripheral stalk is formed by the delta and b chains.

Its subcellular location is the cell membrane. It carries out the reaction ATP + H2O + 4 H(+)(in) = ADP + phosphate + 5 H(+)(out). In terms of biological role, produces ATP from ADP in the presence of a proton gradient across the membrane. The alpha chain is a regulatory subunit. The protein is ATP synthase subunit alpha of Bacillus velezensis (strain DSM 23117 / BGSC 10A6 / LMG 26770 / FZB42) (Bacillus amyloliquefaciens subsp. plantarum).